Consider the following 114-residue polypeptide: Iron-sulfur cluster insertion protein ErpA (114 aa).

Cys42, Cys106, and Cys108 together coordinate iron-sulfur cluster.

Belongs to the HesB/IscA family. Homodimer. It depends on iron-sulfur cluster as a cofactor.

Required for insertion of 4Fe-4S clusters for at least IspG. The protein is Iron-sulfur cluster insertion protein ErpA of Buchnera aphidicola subsp. Acyrthosiphon pisum (strain APS) (Acyrthosiphon pisum symbiotic bacterium).